A 73-amino-acid chain; its full sequence is Large ribosomal subunit protein bL31 (73 aa).

This sequence belongs to the bacterial ribosomal protein bL31 family. Type A subfamily. In terms of assembly, part of the 50S ribosomal subunit.

Its function is as follows. Binds the 23S rRNA. In Ruegeria sp. (strain TM1040) (Silicibacter sp.), this protein is Large ribosomal subunit protein bL31.